Consider the following 254-residue polypeptide: MNIKPLPDNGDLVVVKITEVKNFGANGVLEEYPGVEGYIHISEVATGWVKHIRSYLREGQRVVCKVIGVNPERKVVDLSLKRVNQHQSREKIAEWKNEQKADKLFEIVCSRLNRNPEECKEQFGRRLVELFGTLFAAFESAAQSNGEWLPEMNGDWKNVFVEIAKENITIPEVSVSGYFEVYSLASDGVERIKEVLTIPEDTGKVELEYVGAPRYRIVVKDKDYKKAEEILKKVVQIVNEKAKKLQVEVEFNKQ.

Residues 10 to 81 (GDLVVVKITE…ERKVVDLSLK (72 aa)) form the S1 motif domain.

Belongs to the eIF-2-alpha family. In terms of assembly, heterotrimer composed of an alpha, a beta and a gamma chain.

Its function is as follows. eIF-2 functions in the early steps of protein synthesis by forming a ternary complex with GTP and initiator tRNA. The chain is Translation initiation factor 2 subunit alpha from Thermoplasma acidophilum (strain ATCC 25905 / DSM 1728 / JCM 9062 / NBRC 15155 / AMRC-C165).